Consider the following 430-residue polypeptide: 26S protease regulatory subunit 6A (430 aa).

Residue G218–T225 participates in ATP binding.

It belongs to the AAA ATPase family. As to quaternary structure, component of the 19S proteasome regulatory particle complex. The 26S proteasome consists of a 20S core particle (CP) and two 19S regulatory subunits (RP). The regulatory particle is made of a lid composed of 9 subunits, a base containing 6 ATPases including the PSMC3 homolog rpt-5 and few additional components.

It is found in the cytoplasm. It localises to the nucleus. In terms of biological role, component of the 26S proteasome, a multiprotein complex involved in the ATP-dependent degradation of ubiquitinated proteins. This complex plays a key role in the maintenance of protein homeostasis by removing misfolded or damaged proteins, which could impair cellular functions, and by removing proteins whose functions are no longer required. Therefore, the proteasome participates in numerous cellular processes, including cell cycle progression, apoptosis, or DNA damage repair. Belongs to the heterohexameric ring of AAA (ATPases associated with diverse cellular activities) proteins that unfolds ubiquitinated target proteins that are concurrently translocated into a proteolytic chamber and degraded into peptides. The polypeptide is 26S protease regulatory subunit 6A (Caenorhabditis elegans).